The sequence spans 587 residues: 5-aminolevulinate synthase, erythroid-specific, mitochondrial (587 aa).

A mitochondrion-targeting transit peptide spans 1 to 49; that stretch reads MVAAAMLLRSCPVLSKGPTGLLGKVAKTYQFLFGIGRCPILATQGPTCS. R163 serves as a coordination point for succinyl-CoA. Residues C258 and F259 each coordinate pyridoxal 5'-phosphate. Succinyl-CoA is bound by residues S280 and K299. Pyridoxal 5'-phosphate contacts are provided by S332, H360, and T388. K391 is a catalytic residue. K391 carries the N6-(pyridoxal phosphate)lysine modification. T420 and T421 together coordinate pyridoxal 5'-phosphate. Residue T508 participates in succinyl-CoA binding.

The protein belongs to the class-II pyridoxal-phosphate-dependent aminotransferase family. As to quaternary structure, homodimer. Interacts with SUCLA2. The cofactor is pyridoxal 5'-phosphate. As to expression, erythroid-specific.

Its subcellular location is the mitochondrion inner membrane. The enzyme catalyses succinyl-CoA + glycine + H(+) = 5-aminolevulinate + CO2 + CoA. Its pathway is porphyrin-containing compound metabolism; protoporphyrin-IX biosynthesis; 5-aminolevulinate from glycine: step 1/1. In terms of biological role, catalyzes the pyridoxal 5'-phosphate (PLP)-dependent condensation of succinyl-CoA and glycine to form aminolevulinic acid (ALA), with CoA and CO2 as by-products. Contributes significantly to heme formation during erythropoiesis. This chain is 5-aminolevulinate synthase, erythroid-specific, mitochondrial (Alas2), found in Rattus norvegicus (Rat).